We begin with the raw amino-acid sequence, 352 residues long: Phosphoribosylformylglycinamidine cyclo-ligase (352 aa).

Belongs to the AIR synthase family.

Its subcellular location is the cytoplasm. It carries out the reaction 2-formamido-N(1)-(5-O-phospho-beta-D-ribosyl)acetamidine + ATP = 5-amino-1-(5-phospho-beta-D-ribosyl)imidazole + ADP + phosphate + H(+). The protein operates within purine metabolism; IMP biosynthesis via de novo pathway; 5-amino-1-(5-phospho-D-ribosyl)imidazole from N(2)-formyl-N(1)-(5-phospho-D-ribosyl)glycinamide: step 2/2. This chain is Phosphoribosylformylglycinamidine cyclo-ligase, found in Pseudomonas fluorescens (strain ATCC BAA-477 / NRRL B-23932 / Pf-5).